We begin with the raw amino-acid sequence, 627 residues long: Lactose permease (627 aa).

Positions 1 to 460 (MKKKLVSRLS…AEIVDQLETQ (460 aa)) are permease. 12 helical membrane passes run 13-33 (AGAFGNDVFYATLSTYFIVFV), 46-66 (IFIITNLITAIRIGEVLLDPL), 84-104 (WVVGGGIISSLALLALFTDFG), 111-131 (PVVYLVIFGIVYLIMDIFYSF), 159-179 (VGSTIGANLVGVVITPIILFF), 193-213 (WFFFALIVAIVGILTSITVGL), 244-264 (LLWLAFAYWFYGLGINTLNAL), 281-301 (LLYTINTFVGLISASFFPSLA), 309-329 (LFYACIAVMLLGIGVFSVASG), 336-356 (VGAEFFFIPQPLAFLVVLMII), 392-412 (WFVSLIALTAGMTTGATASTI), and 419-439 (VFKLAMFALPAVMLLIAVSIF). The PTS EIIA type-1 domain occupies 493-597 (DPVFADKKLG…DDTVIVTVIN (105 aa)). Residue H545 is modified to Phosphohistidine; by HPr.

The protein in the N-terminal section; belongs to the sodium:galactoside symporter (TC 2.A.2) family.

The protein resides in the cell membrane. Its function is as follows. Responsible for transport of beta-galactosides into the cell, with the concomitant uptake of protons (symport system), and also for transport of homologous and heterologous exchange of beta-galactosides. The protein is Lactose permease (lacY) of Lactobacillus delbrueckii subsp. bulgaricus (strain ATCC 11842 / DSM 20081 / BCRC 10696 / JCM 1002 / NBRC 13953 / NCIMB 11778 / NCTC 12712 / WDCM 00102 / Lb 14).